Reading from the N-terminus, the 968-residue chain is RNA polymerase-associated protein RapA (968 aa).

Residues 164–334 (EVGQRHAPRV…FARLRLLDPN (171 aa)) form the Helicase ATP-binding domain. 177-184 (DEVGLGKT) contributes to the ATP binding site. Positions 280–283 (DEAH) match the DEAH box motif. Residues 490–664 (RVEWLLNYLV…AAPTEQEGLD (175 aa)) form the Helicase C-terminal domain.

The protein belongs to the SNF2/RAD54 helicase family. RapA subfamily. As to quaternary structure, interacts with the RNAP. Has a higher affinity for the core RNAP than for the holoenzyme. Its ATPase activity is stimulated by binding to RNAP.

Its function is as follows. Transcription regulator that activates transcription by stimulating RNA polymerase (RNAP) recycling in case of stress conditions such as supercoiled DNA or high salt concentrations. Probably acts by releasing the RNAP, when it is trapped or immobilized on tightly supercoiled DNA. Does not activate transcription on linear DNA. Probably not involved in DNA repair. The polypeptide is RNA polymerase-associated protein RapA (Serratia proteamaculans (strain 568)).